The primary structure comprises 89 residues: Small ribosomal subunit protein uS15 (89 aa).

The segment covering 1 to 21 has biased composition (basic and acidic residues); that stretch reads MSVDAETKTKIIKDNARDKND. The interval 1 to 26 is disordered; it reads MSVDAETKTKIIKDNARDKNDTGSPE.

The protein belongs to the universal ribosomal protein uS15 family. Part of the 30S ribosomal subunit. Forms a bridge to the 50S subunit in the 70S ribosome, contacting the 23S rRNA.

Functionally, one of the primary rRNA binding proteins, it binds directly to 16S rRNA where it helps nucleate assembly of the platform of the 30S subunit by binding and bridging several RNA helices of the 16S rRNA. Forms an intersubunit bridge (bridge B4) with the 23S rRNA of the 50S subunit in the ribosome. In Erythrobacter litoralis (strain HTCC2594), this protein is Small ribosomal subunit protein uS15.